The primary structure comprises 497 residues: Low affinity K(+) transporter 1 (497 aa).

Over 1-29 the chain is Extracellular; it reads MFNHDWKYSINSKTFADLNIELFRNHKFK. A helical membrane pass occupies residues 30–50; the sequence is TVLNYIIGVVGWNGLKLALFV. Residues 51-80 are Cytoplasmic-facing; sequence SDIYTCIKLLAFNSWSNNIIKPYLPFKISK. A helical transmembrane segment spans residues 81-101; it reads WLFSGCILASIVLLIWEAIAG. Residues 102 to 216 lie on the Extracellular side of the membrane; sequence MRIYKTGNIS…TNHEEAVILS (115 aa). Residues 217-237 form a helical membrane-spanning segment; that stretch reads LMLFSFIIWALFVFKFLLAVI. At 238–497 the chain is on the cytoplasmic side; it reads CSIFVYYKII…EDEDRTYNYT (260 aa). Ser-291 and Ser-319 each carry phosphoserine. The tract at residues 420–469 is disordered; sequence EFHGPLDSMPNTTNNIRNFNSNSSRPRPPPLQTKSSINSKADSNDNGRIY. Low complexity predominate over residues 429 to 444; the sequence is PNTTNNIRNFNSNSSR. Over residues 451–465 the composition is skewed to polar residues; that stretch reads QTKSSINSKADSNDN.

It belongs to the KCH1 low affinity K(+) transporter family.

It is found in the vacuole membrane. It localises to the cell membrane. The catalysed reaction is K(+)(in) = K(+)(out). Functionally, low affinity potassium transporter that, with PRM6/KCH2, participates in high-affinity Ca(2+) influx system (HACS) activation during the response to mating pheromone. Directly promotes K(+) influx and HACS may electrochemically respond to this K(+) influx. KCH1 and KCH2 act at the apex of the calcium signaling pathway that is used for survival during prolonged exposures to mating pheromones. In Saccharomyces cerevisiae (strain ATCC 204508 / S288c) (Baker's yeast), this protein is Low affinity K(+) transporter 1.